The following is a 176-amino-acid chain: MGDPKKPRKKWMGPKHPWIKERLVRELELVGRYGLRNKRELWKLETLARYFRHRARSLLALPPEVREKEEKALLARLNELGVLPENATLDDVLNLTAEHFLERRLQTIVYKKGLARTIYEARQLIVHGHIAIAGRKIRSPGYLVKKDEEDLVDYAPTSPYAKRRLEEQVQQEEAAS.

One can recognise an S4 RNA-binding domain in the interval 103–165 (RRLQTIVYKK…PTSPYAKRRL (63 aa)).

This sequence belongs to the universal ribosomal protein uS4 family. As to quaternary structure, part of the 30S ribosomal subunit. Contacts protein S5. The interaction surface between S4 and S5 is involved in control of translational fidelity.

One of the primary rRNA binding proteins, it binds directly to 16S rRNA where it nucleates assembly of the body of the 30S subunit. In terms of biological role, with S5 and S12 plays an important role in translational accuracy. This is Small ribosomal subunit protein uS4 from Hyperthermus butylicus (strain DSM 5456 / JCM 9403 / PLM1-5).